The chain runs to 152 residues: Transcriptional repressor NrdR (152 aa).

Residues 3–34 (CPFCNHGELKVIDSRNAPEANAIKRRRECLKC) fold into a zinc finger. In terms of domain architecture, ATP-cone spans 48 to 138 (LQVLKRDGRY…VYRRFKDVGE (91 aa)).

Belongs to the NrdR family. Zn(2+) serves as cofactor.

In terms of biological role, negatively regulates transcription of bacterial ribonucleotide reductase nrd genes and operons by binding to NrdR-boxes. The sequence is that of Transcriptional repressor NrdR from Chlamydia pneumoniae (Chlamydophila pneumoniae).